The primary structure comprises 98 residues: Protein FAM24A (98 aa).

A signal peptide spans 1–29; that stretch reads MFDLRTKVMIGIASTLLIAAIVLITVVFC.

It belongs to the FAM24 family.

It is found in the secreted. This is Protein FAM24A (Fam24a) from Rattus norvegicus (Rat).